Here is a 159-residue protein sequence, read N- to C-terminus: Ribosomal RNA large subunit methyltransferase H (159 aa).

Residues leucine 76, glycine 108, and 127–132 (FSKMTL) contribute to the S-adenosyl-L-methionine site.

It belongs to the RNA methyltransferase RlmH family. In terms of assembly, homodimer.

It is found in the cytoplasm. It catalyses the reaction pseudouridine(1915) in 23S rRNA + S-adenosyl-L-methionine = N(3)-methylpseudouridine(1915) in 23S rRNA + S-adenosyl-L-homocysteine + H(+). Its function is as follows. Specifically methylates the pseudouridine at position 1915 (m3Psi1915) in 23S rRNA. The chain is Ribosomal RNA large subunit methyltransferase H from Bacillus cereus (strain ATCC 10987 / NRS 248).